We begin with the raw amino-acid sequence, 363 residues long: UDP-3-O-acylglucosamine N-acyltransferase (363 aa).

Histidine 252 serves as the catalytic Proton acceptor.

The protein belongs to the transferase hexapeptide repeat family. LpxD subfamily. As to quaternary structure, homotrimer.

The enzyme catalyses a UDP-3-O-[(3R)-3-hydroxyacyl]-alpha-D-glucosamine + a (3R)-hydroxyacyl-[ACP] = a UDP-2-N,3-O-bis[(3R)-3-hydroxyacyl]-alpha-D-glucosamine + holo-[ACP] + H(+). The protein operates within bacterial outer membrane biogenesis; LPS lipid A biosynthesis. Functionally, catalyzes the N-acylation of UDP-3-O-acylglucosamine using 3-hydroxyacyl-ACP as the acyl donor. Is involved in the biosynthesis of lipid A, a phosphorylated glycolipid that anchors the lipopolysaccharide to the outer membrane of the cell. The polypeptide is UDP-3-O-acylglucosamine N-acyltransferase (Cupriavidus taiwanensis (strain DSM 17343 / BCRC 17206 / CCUG 44338 / CIP 107171 / LMG 19424 / R1) (Ralstonia taiwanensis (strain LMG 19424))).